Reading from the N-terminus, the 1026-residue chain is Multidrug resistance protein MdtC (1026 aa).

Transmembrane regions (helical) follow at residues 15 to 35, 333 to 353, 360 to 380, 387 to 407, 431 to 451, 463 to 483, 528 to 548, 853 to 873, 897 to 917, 953 to 973, and 984 to 1004; these read ILIA…LPVA, EVEE…FLFL, LIPA…MYLC, LSLM…IVVL, VGFT…PLLL, FAVT…TLTP, LVGV…IAIP, LILI…LYES, LFNA…IGIV, PIMM…LSGG, and ITIV…TPVV.

The protein belongs to the resistance-nodulation-cell division (RND) (TC 2.A.6) family. MdtC subfamily. Part of a tripartite efflux system composed of MdtA, MdtB and MdtC. MdtC forms a heteromultimer with MdtB.

The protein localises to the cell inner membrane. In Salmonella arizonae (strain ATCC BAA-731 / CDC346-86 / RSK2980), this protein is Multidrug resistance protein MdtC.